A 329-amino-acid chain; its full sequence is Flotillin-like protein FloA (329 aa).

Helical transmembrane passes span 6 to 26 (FIVIAVIIIVALLILFSFVPI) and 27 to 47 (GLWISALAAGVHVGIGTLVGM).

It belongs to the flotillin-like FloA family. In terms of assembly, homooligomerizes.

The protein localises to the cell membrane. The protein resides in the membrane raft. Its function is as follows. Found in functional membrane microdomains (FMM) that may be equivalent to eukaryotic membrane rafts. FMMs are highly dynamic and increase in number as cells age. Flotillins are thought to be important factors in membrane fluidity. The sequence is that of Flotillin-like protein FloA from Staphylococcus aureus (strain JH1).